The following is a 464-amino-acid chain: E3 ubiquitin-protein ligase parkin (464 aa).

Residues 1 to 76 (MIVFVRFNSS…VHIVQRPRRR (76 aa)) form the Ubiquitin-like domain. Ser-65 is subject to Phosphoserine; by PINK1. The interval 70–96 (VQRPRRRSHETNASGGDEPQSTSEGSI) is disordered. The necessary for PINK1-dependent localization to mitochondria stretch occupies residues 77–236 (SHETNASGGD…LITSNRRSIP (160 aa)). Thr-80 carries the post-translational modification Phosphothreonine. A compositionally biased stretch (polar residues) spans 80-96 (TNASGGDEPQSTSEGSI). An RING-type 0; atypical zinc finger spans residues 140 to 224 (PTYNSFFIYC…PTSDKDTSVA (85 aa)). At Thr-174 the chain carries Phosphothreonine; by PINK1. Residues 203–237 (TRAEFFFKCGAHPTSDKDTSVALNLITSNRRSIPC) are SYT11 binding 1. Thr-216 carries the phosphothreonine modification. The TRIAD supradomain stretch occupies residues 233–464 (RSIPCIACTD…ACMGDHWFDV (232 aa)). The Zn(2+) site is built by Cys-237, Cys-240, Cys-252, His-256, Cys-259, Cys-262, Cys-288, Cys-292, Cys-331, and Cys-336. Residues 237 to 292 (CIACTDVRSPVLVFQCNHRHVICLDCFHLYCVTRLNDRQFVHDAQLGYSLPCVAGC) form an RING-type 1 zinc finger. Positions 256–292 (HVICLDCFHLYCVTRLNDRQFVHDAQLGYSLPCVAGC) are SYT11 binding 2. The IBR-type zinc finger occupies 312 to 376 (TRYQQYGAEE…CKEAYHEGDC (65 aa)). Lys-348 participates in a covalent cross-link: Glycyl lysine isopeptide (Lys-Gly) (interchain with G-Cter in ISG15). Zn(2+)-binding residues include Cys-351, Cys-359, Cys-364, and Cys-367. Residue Lys-368 forms a Glycyl lysine isopeptide (Lys-Gly) (interchain with G-Cter in ISG15) linkage. Residues His-372 and Cys-376 each contribute to the Zn(2+) site. Residues 377-409 (DSLLEPSGATSQAYRVDKRAAEQARWEEASKET) form an REP region. Zn(2+) contacts are provided by Cys-417 and Cys-420. An RING-type 2; atypical zinc finger spans residues 417-448 (CPRCNVPIEKNGGCMHMKCPQPQCKLEWCWNC). Cys-430 is a catalytic residue. Residues Cys-435, Cys-440, Cys-445, Cys-448, Cys-456, and His-460 each coordinate Zn(2+).

This sequence belongs to the RBR family. Parkin subfamily. Forms an E3 ubiquitin ligase complex with UBE2L3 or UBE2L6. Mediates 'Lys-63'-linked polyubiquitination by associating with UBE2V1. Part of a SCF-like complex, consisting of PRKN, CUL1 and FBXW7. Interacts with SNCAIP. Binds to the C2A and C2B domains of SYT11. Interacts and regulates the turnover of SEPTIN5. Part of a complex, including STUB1, HSP70 and GPR37. The amount of STUB1 in the complex increases during ER stress. STUB1 promotes the dissociation of HSP70 from PRKN and GPR37, thus facilitating PRKN-mediated GPR37 ubiquitination. HSP70 transiently associates with unfolded GPR37 and inhibits the E3 activity of PRKN, whereas, STUB1 enhances the E3 activity of PRKN through promotion of dissociation of HSP70 from PRKN-GPR37 complexes. Interacts with PSMD4 and PACRG. Interacts with LRRK2. Interacts with RANBP2. Interacts with SUMO1 but not SUMO2, which promotes nuclear localization and autoubiquitination. Interacts (via first RING-type domain) with AIMP2 (via N-terminus). Interacts with PSMA7 and RNF41. Interacts with PINK1. Forms a complex with PINK1 and PARK7. Interacts with CHPF, the interaction with isoform 2 may facilitate PRKN transport into the mitochondria. Interacts with MFN2 (phosphorylated), promotes PRKN localization in dysfunctional depolarized mitochondria. Interacts with FBXO7; this promotes translocation to dysfunctional depolarized mitochondria. Interacts with ZNF746. Interacts with heat shock protein 70 family members, including HSPA1L, HSPA1A and HSPA8; interaction HSPA1L promotes translocation to damaged mitochondria. Interacts with BAG4 and, to a lesser extent, BAG5; interaction with BAG4 inhibits translocation to damaged mitochondria. Forms a complex with PRKN and PARK7. Interacts with AMBRA1. Post-translationally, auto-ubiquitinates in an E2-dependent manner leading to its own degradation. Also polyubiquitinated by RNF41 for proteasomal degradation. In terms of processing, S-nitrosylated. Phosphorylated. Activation requires phosphorylation at Ser-65 by PINK1 and binding to PINK1 phosphorylated ubiquitin. Phosphorylation at Thr-174 by PINK1 and at Thr-216 is important for mitochondrial localization. In terms of tissue distribution, expressed in all subdivisions of the brain (at protein level). Highly expressed in brainstem, cranial nerve, pontine, cerebellar nuclei, indusium griseum, nuclei reticularis, strata oriens and laccunosum moleculare of the hippocampal CA2 region. Low levels were found in the telencephalon and diencephalon. Expressed in heart, liver, skeletal muscle, kidney and testis.

The protein localises to the cytoplasm. Its subcellular location is the cytosol. It is found in the nucleus. The protein resides in the endoplasmic reticulum. It localises to the mitochondrion. The protein localises to the mitochondrion outer membrane. Its subcellular location is the cell projection. It is found in the neuron projection. The protein resides in the postsynaptic density. It localises to the presynapse. The catalysed reaction is [E2 ubiquitin-conjugating enzyme]-S-ubiquitinyl-L-cysteine + [acceptor protein]-L-lysine = [E2 ubiquitin-conjugating enzyme]-L-cysteine + [acceptor protein]-N(6)-ubiquitinyl-L-lysine.. The protein operates within protein modification; protein ubiquitination. With respect to regulation, in the autoinhibited state the side chain of Phe-462 inserts into a hydrophobic groove in RING-0, occluding the ubiquitin acceptor site Cys-430, whereas the REP repressor element binds RING-1 and blocks its E2-binding site. Activation of PRKN requires 2 steps: (1) phosphorylation at Ser-65 by PINK1 and (2) binding to phosphorylated ubiquitin, leading to unlock repression of the catalytic Cys-430 by the RING-0 region via an allosteric mechanism and converting PRKN to its fully-active form. According to another report, phosphorylation at Ser-65 by PINK1 is not essential for activation and only binding to phosphorylated ubiquitin is essential to unlock repression. In addition, ISG15 conjugation positively regulates its ubiquitin E3 ligase activity by suppressing the intramolecular interaction that maintains its autoinhibited conformation. Functionally, functions within a multiprotein E3 ubiquitin ligase complex, catalyzing the covalent attachment of ubiquitin moieties onto substrate proteins. Substrates include SYT11 and VDAC1. Other substrates are BCL2, CCNE1, GPR37, RHOT1/MIRO1, MFN1, MFN2, STUB1, SNCAIP, SEPTIN5, TOMM20, USP30, ZNF746, MIRO1 and AIMP2. Mediates monoubiquitination as well as 'Lys-6', 'Lys-11', 'Lys-48'-linked and 'Lys-63'-linked polyubiquitination of substrates depending on the context. Participates in the removal and/or detoxification of abnormally folded or damaged protein by mediating 'Lys-63'-linked polyubiquitination of misfolded proteins such as PARK7: 'Lys-63'-linked polyubiquitinated misfolded proteins are then recognized by HDAC6, leading to their recruitment to aggresomes, followed by degradation. Mediates 'Lys-63'-linked polyubiquitination of a 22 kDa O-linked glycosylated isoform of SNCAIP, possibly playing a role in Lewy-body formation. Mediates monoubiquitination of BCL2, thereby acting as a positive regulator of autophagy. Protects against mitochondrial dysfunction during cellular stress, by acting downstream of PINK1 to coordinate mitochondrial quality control mechanisms that remove and replace dysfunctional mitochondrial components. Depending on the severity of mitochondrial damage and/or dysfunction, activity ranges from preventing apoptosis and stimulating mitochondrial biogenesis to regulating mitochondrial dynamics and eliminating severely damaged mitochondria via mitophagy. Activation and recruitment onto the outer membrane of damaged/dysfunctional mitochondria (OMM) requires PINK1-mediated phosphorylation of both PRKN and ubiquitin. After mitochondrial damage, functions with PINK1 to mediate the decision between mitophagy or preventing apoptosis by inducing either the poly- or monoubiquitination of VDAC1, respectively; polyubiquitination of VDAC1 promotes mitophagy, while monoubiquitination of VDAC1 decreases mitochondrial calcium influx which ultimately inhibits apoptosis. When cellular stress results in irreversible mitochondrial damage, promotes the autophagic degradation of dysfunctional depolarized mitochondria (mitophagy) by promoting the ubiquitination of mitochondrial proteins such as TOMM20, RHOT1/MIRO1, MFN1 and USP30. Preferentially assembles 'Lys-6'-, 'Lys-11'- and 'Lys-63'-linked polyubiquitin chains, leading to mitophagy. The PINK1-PRKN pathway also promotes fission of damaged mitochondria by PINK1-mediated phosphorylation which promotes the PRKN-dependent degradation of mitochondrial proteins involved in fission such as MFN2. This prevents the refusion of unhealthy mitochondria with the mitochondrial network or initiates mitochondrial fragmentation facilitating their later engulfment by autophagosomes. Regulates motility of damaged mitochondria via the ubiquitination and subsequent degradation of MIRO1 and MIRO2; in motor neurons, this likely inhibits mitochondrial intracellular anterograde transport along the axons which probably increases the chance of the mitochondria undergoing mitophagy in the soma. Involved in mitochondrial biogenesis via the 'Lys-48'-linked polyubiquitination of transcriptional repressor ZNF746/PARIS which leads to its subsequent proteasomal degradation and allows activation of the transcription factor PPARGC1A. Limits the production of reactive oxygen species (ROS). Regulates cyclin-E during neuronal apoptosis. In collaboration with CHPF isoform 2, may enhance cell viability and protect cells from oxidative stress. Independently of its ubiquitin ligase activity, protects from apoptosis by the transcriptional repression of p53/TP53. May protect neurons against alpha synuclein toxicity, proteasomal dysfunction, GPR37 accumulation, and kainate-induced excitotoxicity. May play a role in controlling neurotransmitter trafficking at the presynaptic terminal and in calcium-dependent exocytosis. May represent a tumor suppressor gene. The polypeptide is E3 ubiquitin-protein ligase parkin (Mus musculus (Mouse)).